The sequence spans 237 residues: 1-(5-phosphoribosyl)-5-[(5-phosphoribosylamino)methylideneamino] imidazole-4-carboxamide isomerase (237 aa).

Aspartate 8 serves as the catalytic Proton acceptor. The active-site Proton donor is the aspartate 130.

Belongs to the HisA/HisF family.

Its subcellular location is the cytoplasm. It catalyses the reaction 1-(5-phospho-beta-D-ribosyl)-5-[(5-phospho-beta-D-ribosylamino)methylideneamino]imidazole-4-carboxamide = 5-[(5-phospho-1-deoxy-D-ribulos-1-ylimino)methylamino]-1-(5-phospho-beta-D-ribosyl)imidazole-4-carboxamide. Its pathway is amino-acid biosynthesis; L-histidine biosynthesis; L-histidine from 5-phospho-alpha-D-ribose 1-diphosphate: step 4/9. The polypeptide is 1-(5-phosphoribosyl)-5-[(5-phosphoribosylamino)methylideneamino] imidazole-4-carboxamide isomerase (Caldicellulosiruptor saccharolyticus (strain ATCC 43494 / DSM 8903 / Tp8T 6331)).